The primary structure comprises 329 residues: DGAT1/2-independent enzyme synthesizing storage lipids (329 aa).

At 1-50 the chain is on the lumenal side; the sequence is MIDNNQTCAAGQDSVPYVTCMIYVLEEWLGVEQLEDYLNFANHLLWVFTP. The N-linked (GlcNAc...) asparagine glycan is linked to asparagine 5. Residues 51–71 traverse the membrane as a helical segment; the sequence is LILLILPYFTIFLLYLTIIFL. At 72–120 the chain is on the cytoplasmic side; the sequence is HIYKRKNVLKEAYSHNLWDGARKTVATLWDGHAAVWHGYEVHGMEKIPE. Residues 121-141 traverse the membrane as a helical segment; sequence GAALIIFYHGAIPIDFYYFMA. Residue histidine 129 is part of the active site. Over 142 to 329 the chain is Lumenal; the sequence is KIFIQKGRTC…DRFHKEQKAH (188 aa).

The protein belongs to the diacylglycerol acyltransferase family. Highly divergent. Widely expressed, with highest level in the brain, followed by lung and duodenum, and lowest levels in tongue, testis, skin and ileum.

Its subcellular location is the endoplasmic reticulum membrane. The catalysed reaction is a 1,2-diacylglycerol + a 1,2-diacyl-sn-glycero-3-phosphocholine = a triacylglycerol + a 1-acyl-sn-glycero-3-phosphocholine. The enzyme catalyses a 1-O-alkyl-2-acyl-sn-glycero-3-phosphocholine + a 1,2-diacylglycerol = a 1-O-alkyl-sn-glycero-3-phosphocholine + a triacylglycerol. It carries out the reaction a 2-acylglycerol + an acyl-CoA = a 1,2-diacylglycerol + CoA. It catalyses the reaction an acyl-CoA + a 1,2-diacyl-sn-glycerol = a triacyl-sn-glycerol + CoA. The catalysed reaction is 2-(9Z-octadecenoyl)-glycerol + (9Z)-octadecenoyl-CoA = 1,2-di-(9Z-octadecenoyl)-glycerol + CoA. The enzyme catalyses 1,2-di-(9Z-octadecenoyl)-sn-glycerol + (9Z)-octadecenoyl-CoA = 1,2,3-tri-(9Z-octadecenoyl)-glycerol + CoA. Its activity is regulated as follows. Acyltransferase activity is specifically inhibited by TMX1 at the endoplasmic reticulum, restricting accumulation of triacylglycerol. Functionally, catalytic subunit of the alternative triglyceride biosynthesis pathway, which mediates formation of triacylglycerol from diacylglycerol and membrane phospholipids. Synthesizes triacylglycerol at the expense of membrane phospholipids, such as phosphatidylcholine (PC) and its ether-linked form (ePC), thereby altering the composition of membranes. The alternative triglyceride biosynthesis pathway is probably required to provide the energy required for rapid growth when fuel sources are limiting. It maintains mitochondrial function during periods of extracellular lipid starvation. Can also use acyl-CoA as donor: acts as a acyl-CoA:monoacylglycerol acyltransferase (MGAT), but also shows acyl-CoA:diacylglycerol acyltransferase (DGAT) activity. This chain is DGAT1/2-independent enzyme synthesizing storage lipids, found in Mus musculus (Mouse).